A 1159-amino-acid chain; its full sequence is ATP-dependent helicase/deoxyribonuclease subunit B (1159 aa).

It belongs to the helicase family. AddB/RexB type 2 subfamily. As to quaternary structure, heterodimer of AddA and RexB. The cofactor is Mg(2+).

In terms of biological role, the heterodimer acts as both an ATP-dependent DNA helicase and an ATP-dependent, dual-direction single-stranded exonuclease. Recognizes the chi site generating a DNA molecule suitable for the initiation of homologous recombination. This subunit has 5' -&gt; 3' nuclease activity but not helicase activity. The chain is ATP-dependent helicase/deoxyribonuclease subunit B from Leuconostoc mesenteroides subsp. mesenteroides (strain ATCC 8293 / DSM 20343 / BCRC 11652 / CCM 1803 / JCM 6124 / NCDO 523 / NBRC 100496 / NCIMB 8023 / NCTC 12954 / NRRL B-1118 / 37Y).